A 545-amino-acid chain; its full sequence is ATP synthase subunit alpha (545 aa).

Position 172-179 (172-179) interacts with ATP; sequence GDRKTGKT. The tract at residues 511 to 545 is disordered; it reads FQTTDGTPVINEPEARPLGDDEVTKSQITVSRKTQ. Residues 523–534 are compositionally biased toward basic and acidic residues; sequence PEARPLGDDEVT. The span at 535–545 shows a compositional bias: polar residues; sequence KSQITVSRKTQ.

The protein belongs to the ATPase alpha/beta chains family. As to quaternary structure, F-type ATPases have 2 components, CF(1) - the catalytic core - and CF(0) - the membrane proton channel. CF(1) has five subunits: alpha(3), beta(3), gamma(1), delta(1), epsilon(1). CF(0) has three main subunits: a(1), b(2) and c(9-12). The alpha and beta chains form an alternating ring which encloses part of the gamma chain. CF(1) is attached to CF(0) by a central stalk formed by the gamma and epsilon chains, while a peripheral stalk is formed by the delta and b chains.

The protein resides in the cell membrane. It carries out the reaction ATP + H2O + 4 H(+)(in) = ADP + phosphate + 5 H(+)(out). In terms of biological role, produces ATP from ADP in the presence of a proton gradient across the membrane. The alpha chain is a regulatory subunit. In Corynebacterium jeikeium (strain K411), this protein is ATP synthase subunit alpha.